A 28-amino-acid chain; its full sequence is Alkaline serine protease NJP (28 aa).

With respect to regulation, inhibited by PMSF. Not or very weakly inhibited by EDTA, EGTA, beta-mercaptoethanol, benzamidine, aprotinin, iodoacetic acid, pepstatin A and SBTI. Alkaline thrombin-like serine protease. Has fibrinolytic and fibrinogenolytic but not plasminogenolytic activity. Cleaves fibrinogen chains Aalpha, Bbeta and gamma chains in that order. Cleaves after Arg and Lys residues. This chain is Alkaline serine protease NJP, found in Hediste japonica (Polychaete worm).